The chain runs to 250 residues: Tryptophan synthase alpha chain (250 aa).

Active-site proton acceptor residues include Glu-31 and Asp-42.

Belongs to the TrpA family. In terms of assembly, tetramer of two alpha and two beta chains.

It catalyses the reaction (1S,2R)-1-C-(indol-3-yl)glycerol 3-phosphate + L-serine = D-glyceraldehyde 3-phosphate + L-tryptophan + H2O. The protein operates within amino-acid biosynthesis; L-tryptophan biosynthesis; L-tryptophan from chorismate: step 5/5. The alpha subunit is responsible for the aldol cleavage of indoleglycerol phosphate to indole and glyceraldehyde 3-phosphate. The sequence is that of Tryptophan synthase alpha chain from Staphylococcus carnosus (strain TM300).